Consider the following 184-residue polypeptide: Protein GrpE (184 aa).

Residues 1–35 (MTQENQNPPPEQEDVAADPQVNEAAASEPAAVKTP) are disordered.

The protein belongs to the GrpE family. Homodimer.

It is found in the cytoplasm. Functionally, participates actively in the response to hyperosmotic and heat shock by preventing the aggregation of stress-denatured proteins, in association with DnaK and GrpE. It is the nucleotide exchange factor for DnaK and may function as a thermosensor. Unfolded proteins bind initially to DnaJ; upon interaction with the DnaJ-bound protein, DnaK hydrolyzes its bound ATP, resulting in the formation of a stable complex. GrpE releases ADP from DnaK; ATP binding to DnaK triggers the release of the substrate protein, thus completing the reaction cycle. Several rounds of ATP-dependent interactions between DnaJ, DnaK and GrpE are required for fully efficient folding. This Polynucleobacter asymbioticus (strain DSM 18221 / CIP 109841 / QLW-P1DMWA-1) (Polynucleobacter necessarius subsp. asymbioticus) protein is Protein GrpE.